The sequence spans 185 residues: Ribosome-recycling factor (185 aa).

The disordered stretch occupies residues 136–161; that stretch reads MDSLKTDEKKGEIGEDDRKRRETEVQ.

Belongs to the RRF family.

The protein localises to the cytoplasm. In terms of biological role, responsible for the release of ribosomes from messenger RNA at the termination of protein biosynthesis. May increase the efficiency of translation by recycling ribosomes from one round of translation to another. In Rhizorhabdus wittichii (strain DSM 6014 / CCUG 31198 / JCM 15750 / NBRC 105917 / EY 4224 / RW1) (Sphingomonas wittichii), this protein is Ribosome-recycling factor.